The following is a 293-amino-acid chain: uncharacterized protein (293 aa).

The HTH lysR-type domain occupies 1–58; that stretch reads MQLQELHMLVVLAEELNMRKAAERLFVSQPALSQRLQTIEKAWGTKIFLRSQKGLTVT. A DNA-binding region (H-T-H motif) is located at residues 18 to 37; sequence MRKAAERLFVSQPALSQRLQ.

It belongs to the LysR transcriptional regulatory family.

This is an uncharacterized protein from Bacillus subtilis (strain 168).